We begin with the raw amino-acid sequence, 531 residues long: Tyrosine 2,3-aminomutase (531 aa).

Y51 (proton donor/acceptor) is an active-site residue. H81 provides a ligand contact to substrate. The 5-imidazolinone (Ala-Gly) cross-link spans 140–142 (ASG). S141 is modified (2,3-didehydroalanine (Ser)). 2 residues coordinate substrate: N193 and R298.

The protein belongs to the TAL/TAM family. As to quaternary structure, homotetramer; dimer of dimers. Contains an active site 4-methylidene-imidazol-5-one (MIO), which is formed autocatalytically by cyclization and dehydration of residues Ala-Ser-Gly.

The enzyme catalyses L-tyrosine = 3-amino-3-(4-hydroxyphenyl)propanoate. The catalysed reaction is L-tyrosine = (E)-4-coumarate + NH4(+). Has aminomutase and, to a lesser extent, ammonia-lyase activity. Primarily, catalyzes the rearrangement of L-tyrosine to R-beta-tyrosine, which is incorporated into secondary metabolites called chondramides. The aminomutase activity mainly produces R-beta-tyrosine but also S-beta tyrosine in smaller amounts. Does not accept D-tyrosine, L-histidine or L-phenylalanine as substrates. This chain is Tyrosine 2,3-aminomutase, found in Chondromyces crocatus.